Here is a 1151-residue protein sequence, read N- to C-terminus: MDLASFQNLLQQCQTEQDTQKRKEVEDFYFKYKQEEPASYVANIIEVICSNSSSSNYAAILFRRDMEQSGDVAAVYRAGNGNPECVHEVMVRILNTMLGQTSSNSIRFLSEILGVHLERILESDPQGGVAQFPEFFQALETHFAAPTTTSQLRVGFLNCIKYICGLAYTSVTKIGGKAIIDLIFAGLEDQADTVAVAAIKCVNALILYGDSDDEDEKNDSVIPNSVLQQFVYKIIQRLPAMIGRHNFMDAEQALEQLVDIADMNGAVLKPMVKDVHILVTGILSPPEIDDSLKRLTIVLFSYLCENISDIRKRAKKAISEIISQFIFPYCGLFDDTLTQAWLTSEDPHHFDDQNSLLGYAESALDRISTTLGYKVIFPLIKDFVSYAKANPTVHNCFAVANIFTITAEGLARLVTKEDIVFTIDTLLELSNHPHQRVRYSVLSAIGQLSEDYAPTFQTFHEKVMPLLTKMAQDPCIAVAAHSLGALVNFLEHLKKAETYLYKDALEPVITMHLMQSNHLLSNTNSLALVASLSNTLLKNDFADMCKNYIPHILGMFTNVMETLRKSPNMSLNKPRLSYISRILECLSIVAGTLPQLFAPHIDPLLTAIMELFNFSIDDAESSLLKYTLIAVSRIVDIYPETFPKYMDPIIAKLNDIFNLKYIEFDNVNEFAVTDDDDCSFTISPHVLQLQAVGFDVISGIMRKTPAAFAPHLDAFLTKIQDRSFHTGSISESLKLNSIECICTAFRVAVAAPTVASPPAVHQRAFTMLIAATESNIDDIDIYQSIADSMAEYVMDYCKYITSTKDMTSYTETVNKVFSLLENFEDQCRKLLEVSIQDLECDDDLDPEETATMVSDTVDDFSDAIATFADVYGTFAEALGDLSLDFMSPLLMPVIKRWVNYYTSTKKNGISGAQVAFLTSAVSILADIVKYLSPANSKSLVEPFVTIIIENTKLNKEWVEINQVCCYTAGLLFEKYEGDPGLAILIPTLLANATELIGVVKSGELVSKEALAAYDNAVTLSARMAQAFPTELGNMSGGLTQFWASWLDLASTVQTDREEVIASIQLIISAFARNDPNFMSGNLVHALYAFLSLYFGDHHISIVEDQTNANLIEGANTVLTQIAGHGTILADTIAKCSEYVQKTYSLYTSVRQ.

24 HEAT repeats span residues 1–36 (MDLA…KQEE), 37–82 (PASY…GNGN), 83–132 (PECV…VAQF), 133–175 (PEFF…TKIG), 176–222 (GKAI…DSVI), 223–269 (PNSV…AVLK), 270–316 (PMVK…RAKK), 317–377 (AISE…KVIF), 378–416 (PLIK…LVTK), 417–453 (EDIV…EDYA), 454–495 (PTFQ…HLKK), 496–540 (AETY…LKND), 541–593 (FADM…AGTL), 594–642 (PQLF…PETF), 643–704 (PKYM…MRKT), 705–756 (PAAF…TVAS), 757–811 (PPAV…SYTE), 812–880 (TVNK…ALGD), 881–932 (LSLD…KYLS), 933–978 (PANS…YEGD), 979–1027 (PGLA…AQAF), 1028–1074 (PTEL…ARND), 1075–1120 (PNFM…VLTQ), and 1121–1151 (IAGH…SVRQ).

Belongs to the importin beta family.

Its subcellular location is the nucleus intermembrane space. It localises to the cytoplasm. The protein resides in the nucleus. Functionally, functions in nuclear protein import as nuclear transport receptor. Involved in encystation process. Constitutive expression enhances cyst production and increases transcription of endogenous genes involved in encystation. Level of mRNA of the transcriptional factor myb1-like protein increases in early stages of the encystation process followed by increased mRNAs of the cyst wall proteins cwp1-3. This chain is Importin beta, found in Giardia intestinalis (strain ATCC 50803 / WB clone C6) (Giardia lamblia).